A 330-amino-acid chain; its full sequence is tRNA-modifying protein YgfZ (330 aa).

Trp28 and Trp190 together coordinate folate.

Belongs to the tRNA-modifying YgfZ family.

Its subcellular location is the cytoplasm. Functionally, folate-binding protein involved in regulating the level of ATP-DnaA and in the modification of some tRNAs. It is probably a key factor in regulatory networks that act via tRNA modification, such as initiation of chromosomal replication. In Yersinia enterocolitica serotype O:8 / biotype 1B (strain NCTC 13174 / 8081), this protein is tRNA-modifying protein YgfZ.